We begin with the raw amino-acid sequence, 398 residues long: uncharacterized protein (398 aa).

A signal peptide spans 1–22 (MKLKFYKLPLITTAFSFVFLTA). Cys-23 carries the N-palmitoyl cysteine lipid modification. Cys-23 carries S-diacylglycerol cysteine lipidation.

The protein localises to the cell membrane. This is an uncharacterized protein from Mycoplasma genitalium (strain ATCC 33530 / DSM 19775 / NCTC 10195 / G37) (Mycoplasmoides genitalium).